The primary structure comprises 67 residues: Large ribosomal subunit protein bL35 (67 aa).

The segment covering 1-16 (MPKMKTKSGAKKRFRV) has biased composition (basic residues). A disordered region spans residues 1–25 (MPKMKTKSGAKKRFRVRPGGTVKRG).

This sequence belongs to the bacterial ribosomal protein bL35 family.

The polypeptide is Large ribosomal subunit protein bL35 (Polaromonas sp. (strain JS666 / ATCC BAA-500)).